Consider the following 428-residue polypeptide: Adenylosuccinate synthetase (428 aa).

GTP is bound by residues 12–18 (GDEGKGK) and 40–42 (GHT). D13 acts as the Proton acceptor in catalysis. 2 residues coordinate Mg(2+): D13 and G40. Residues 13–16 (DEGK), 38–41 (NAGH), T128, R142, Q223, T238, and R302 each bind IMP. Residue H41 is the Proton donor of the active site. A substrate-binding site is contributed by 298 to 304 (TTTGRPR). GTP is bound by residues R304, 330 to 332 (SID), and 412 to 414 (SVG).

Belongs to the adenylosuccinate synthetase family. As to quaternary structure, homodimer. Mg(2+) serves as cofactor.

Its subcellular location is the cytoplasm. The catalysed reaction is IMP + L-aspartate + GTP = N(6)-(1,2-dicarboxyethyl)-AMP + GDP + phosphate + 2 H(+). Its pathway is purine metabolism; AMP biosynthesis via de novo pathway; AMP from IMP: step 1/2. Functionally, plays an important role in the de novo pathway of purine nucleotide biosynthesis. Catalyzes the first committed step in the biosynthesis of AMP from IMP. The protein is Adenylosuccinate synthetase of Streptococcus pneumoniae serotype 2 (strain D39 / NCTC 7466).